A 369-amino-acid polypeptide reads, in one-letter code: Phosphoribosyl pyrophosphate synthase-associated protein 2 (369 aa).

Met-1 bears the N-acetylmethionine mark. Phosphoserine is present on residues Ser-219, Ser-227, and Ser-233.

This sequence belongs to the ribose-phosphate pyrophosphokinase family. Binds to PRPS1 and PRPS2.

In terms of biological role, seems to play a negative regulatory role in 5-phosphoribose 1-diphosphate synthesis. The sequence is that of Phosphoribosyl pyrophosphate synthase-associated protein 2 (Prpsap2) from Mus musculus (Mouse).